The chain runs to 314 residues: tRNA pseudouridine synthase B (314 aa).

Substrate is bound at residue H43. The active-site Nucleophile is the D48. Y76, Y179, and L200 together coordinate substrate.

This sequence belongs to the pseudouridine synthase TruB family. Type 1 subfamily.

It carries out the reaction uridine(55) in tRNA = pseudouridine(55) in tRNA. Responsible for synthesis of pseudouridine from uracil-55 in the psi GC loop of transfer RNAs. This Escherichia coli O139:H28 (strain E24377A / ETEC) protein is tRNA pseudouridine synthase B.